Reading from the N-terminus, the 372-residue chain is Cytochrome b (372 aa).

The next 4 membrane-spanning stretches (helical) occupy residues 25–45, 69–90, 105–125, and 170–190; these read FGSM…FLAI, WIMQ…YIHI, WLSG…GYVL, and FFAL…IHII. Positions 75 and 89 each coordinate heme b. 2 residues coordinate heme b: H174 and H188. H193 provides a ligand contact to a ubiquinone. 4 consecutive transmembrane segments (helical) span residues 218–238, 280–300, 312–332, and 339–358; these read YKDM…LSFS, LGGT…PFTH, LTQT…WTAT, and FISI…IINP.

Belongs to the cytochrome b family. The cytochrome bc1 complex contains 3 respiratory subunits (MT-CYB, CYC1 and UQCRFS1), 2 core proteins (UQCRC1 and UQCRC2) and probably 6 low-molecular weight proteins. It depends on heme b as a cofactor.

It is found in the mitochondrion inner membrane. Its function is as follows. Component of the ubiquinol-cytochrome c reductase complex (complex III or cytochrome b-c1 complex) that is part of the mitochondrial respiratory chain. The b-c1 complex mediates electron transfer from ubiquinol to cytochrome c. Contributes to the generation of a proton gradient across the mitochondrial membrane that is then used for ATP synthesis. The polypeptide is Cytochrome b (MT-CYB) (Dendroaspis polylepis polylepis (Black mamba)).